Here is a 192-residue protein sequence, read N- to C-terminus: Segregation and condensation protein B (192 aa).

This sequence belongs to the ScpB family. As to quaternary structure, homodimer. Homodimerization may be required to stabilize the binding of ScpA to the Smc head domains. Component of a cohesin-like complex composed of ScpA, ScpB and the Smc homodimer, in which ScpA and ScpB bind to the head domain of Smc. The presence of the three proteins is required for the association of the complex with DNA.

It is found in the cytoplasm. Its function is as follows. Participates in chromosomal partition during cell division. May act via the formation of a condensin-like complex containing Smc and ScpA that pull DNA away from mid-cell into both cell halves. This Mycoplasma mobile (strain ATCC 43663 / 163K / NCTC 11711) (Mesomycoplasma mobile) protein is Segregation and condensation protein B.